Reading from the N-terminus, the 37-residue chain is Large ribosomal subunit protein bL36 (37 aa).

It belongs to the bacterial ribosomal protein bL36 family.

The chain is Large ribosomal subunit protein bL36 from Marinomonas sp. (strain MWYL1).